Reading from the N-terminus, the 251-residue chain is Hydroxyacylglutathione hydrolase (251 aa).

Zn(2+)-binding residues include H53, H55, D57, H58, H110, D127, and H165.

The protein belongs to the metallo-beta-lactamase superfamily. Glyoxalase II family. Monomer. It depends on Zn(2+) as a cofactor.

The catalysed reaction is an S-(2-hydroxyacyl)glutathione + H2O = a 2-hydroxy carboxylate + glutathione + H(+). It participates in secondary metabolite metabolism; methylglyoxal degradation; (R)-lactate from methylglyoxal: step 2/2. In terms of biological role, thiolesterase that catalyzes the hydrolysis of S-D-lactoyl-glutathione to form glutathione and D-lactic acid. This is Hydroxyacylglutathione hydrolase from Escherichia coli (strain UTI89 / UPEC).